Here is a 193-residue protein sequence, read N- to C-terminus: Ribonuclease HII (193 aa).

Residues 15–193 (CIVAGIDEAG…PYHRRSFRCC (179 aa)) form the RNase H type-2 domain. Residues Asp21, Glu22, and Asp112 each coordinate a divalent metal cation.

Belongs to the RNase HII family. The cofactor is Mn(2+). Requires Mg(2+) as cofactor.

It localises to the cytoplasm. It carries out the reaction Endonucleolytic cleavage to 5'-phosphomonoester.. Its function is as follows. Endonuclease that specifically degrades the RNA of RNA-DNA hybrids. This chain is Ribonuclease HII, found in Rickettsia rickettsii (strain Iowa).